The following is a 329-amino-acid chain: Methionyl-tRNA formyltransferase (329 aa).

Residue 112–115 participates in (6S)-5,6,7,8-tetrahydrofolate binding; the sequence is SILP.

This sequence belongs to the Fmt family.

It carries out the reaction L-methionyl-tRNA(fMet) + (6R)-10-formyltetrahydrofolate = N-formyl-L-methionyl-tRNA(fMet) + (6S)-5,6,7,8-tetrahydrofolate + H(+). Functionally, attaches a formyl group to the free amino group of methionyl-tRNA(fMet). The formyl group appears to play a dual role in the initiator identity of N-formylmethionyl-tRNA by promoting its recognition by IF2 and preventing the misappropriation of this tRNA by the elongation apparatus. The chain is Methionyl-tRNA formyltransferase from Shewanella sediminis (strain HAW-EB3).